The chain runs to 129 residues: Profilin-4 (129 aa).

This sequence belongs to the profilin family. In terms of tissue distribution, expressed in testis, in seminiferous tubules (at protein level). Expressed in spermatocytes and spermatids, but not in spermatogonium.

The protein localises to the cytoplasm. Functionally, involved in male fertility. Required for manchette development and acrosome biogenesis during spermiogenesis. Binds in vitro to phospholipids, including phosphatidylinositol 3-phosphate (PtdIns(3)P), phosphatidylinositol 4,5-bisphosphate (PtdIns(4,5)P2), phosphatidylinositol 4-phosphate (PtdIns(4)P) and phosphatidic acid (PA). Contrary to other profilin family members, does not bind to actin in vitro. The chain is Profilin-4 (Pfn4) from Rattus norvegicus (Rat).